A 461-amino-acid chain; its full sequence is UDP-N-acetylmuramoylalanine--D-glutamate ligase (461 aa).

117-123 (GTNGKTT) contacts ATP.

Belongs to the MurCDEF family.

Its subcellular location is the cytoplasm. The catalysed reaction is UDP-N-acetyl-alpha-D-muramoyl-L-alanine + D-glutamate + ATP = UDP-N-acetyl-alpha-D-muramoyl-L-alanyl-D-glutamate + ADP + phosphate + H(+). The protein operates within cell wall biogenesis; peptidoglycan biosynthesis. In terms of biological role, cell wall formation. Catalyzes the addition of glutamate to the nucleotide precursor UDP-N-acetylmuramoyl-L-alanine (UMA). In Synechococcus sp. (strain CC9605), this protein is UDP-N-acetylmuramoylalanine--D-glutamate ligase.